A 133-amino-acid polypeptide reads, in one-letter code: Ribosome-binding factor A (133 aa).

It belongs to the RbfA family. As to quaternary structure, monomer. Binds 30S ribosomal subunits, but not 50S ribosomal subunits or 70S ribosomes.

The protein resides in the cytoplasm. In terms of biological role, one of several proteins that assist in the late maturation steps of the functional core of the 30S ribosomal subunit. Associates with free 30S ribosomal subunits (but not with 30S subunits that are part of 70S ribosomes or polysomes). Required for efficient processing of 16S rRNA. May interact with the 5'-terminal helix region of 16S rRNA. In Escherichia coli O127:H6 (strain E2348/69 / EPEC), this protein is Ribosome-binding factor A.